We begin with the raw amino-acid sequence, 384 residues long: Probable L-aspartate decarboxylase (384 aa).

Lys233 bears the N6-(pyridoxal phosphate)lysine mark.

The protein belongs to the group II decarboxylase family. MfnA subfamily. Pyridoxal 5'-phosphate is required as a cofactor.

It catalyses the reaction L-aspartate + H(+) = beta-alanine + CO2. The protein operates within cofactor biosynthesis; coenzyme A biosynthesis. Functionally, catalyzes the decarboxylation of L-aspartate to produce beta-alanine. This chain is Probable L-aspartate decarboxylase, found in Pyrococcus abyssi (strain GE5 / Orsay).